The primary structure comprises 998 residues: Ephrin type-B receptor 3 (998 aa).

Residues M1–A33 form the signal peptide. At G34 to L559 the chain is on the extracellular side. The region spanning E39–A217 is the Eph LBD domain. An intrachain disulfide couples C81 to C199. Fibronectin type-III domains are found at residues V339–A451 and A452–E545. N351 and N445 each carry an N-linked (GlcNAc...) asparagine glycan. Residues I560–V580 traverse the membrane as a helical segment. Topologically, residues C581–V998 are cytoplasmic. Y614 carries the post-translational modification Phosphotyrosine; by autocatalysis. In terms of domain architecture, Protein kinase spans V633–I896. ATP contacts are provided by residues I639–V647 and K665. D758 serves as the catalytic Proton acceptor. One can recognise an SAM domain in the interval T925–Q989. The PDZ-binding signature appears at V996–V998.

The protein belongs to the protein kinase superfamily. Tyr protein kinase family. Ephrin receptor subfamily. Heterotetramer upon binding of the ligand. The heterotetramer is composed of an ephrin dimer and a receptor dimer. Oligomerization is probably required to induce biological responses. Post-translationally, phosphorylated. Autophosphorylates upon ligand-binding. Autophosphorylation on Tyr-614 is required for interaction with SH2 domain-containing proteins. In terms of processing, ubiquitinated by RNF186, mainly through 'Lys-48' and 'Lys-63'-linked polyubiquitin chains. In terms of tissue distribution, ubiquitous.

It localises to the cell membrane. Its subcellular location is the cell projection. It is found in the dendrite. The enzyme catalyses L-tyrosyl-[protein] + ATP = O-phospho-L-tyrosyl-[protein] + ADP + H(+). In terms of biological role, receptor tyrosine kinase which binds promiscuously transmembrane ephrin-B family ligands residing on adjacent cells, leading to contact-dependent bidirectional signaling into neighboring cells. The signaling pathway downstream of the receptor is referred to as forward signaling while the signaling pathway downstream of the ephrin ligand is referred to as reverse signaling. Generally has an overlapping and redundant function with EPHB2. Like EPHB2, functions in axon guidance during development regulating for instance the neurons forming the corpus callosum and the anterior commissure, 2 major interhemispheric connections between the temporal lobes of the cerebral cortex. In addition to its role in axon guidance also plays an important redundant role with other ephrin-B receptors in development and maturation of dendritic spines and the formation of excitatory synapses. Controls other aspects of development through regulation of cell migration and positioning. This includes angiogenesis, palate development and thymic epithelium development for instance. Forward and reverse signaling through the EFNB2/EPHB3 complex also regulate migration and adhesion of cells that tubularize the urethra and septate the cloaca. Finally, plays an important role in intestinal epithelium differentiation segregating progenitor from differentiated cells in the crypt. This Homo sapiens (Human) protein is Ephrin type-B receptor 3 (EPHB3).